Here is a 444-residue protein sequence, read N- to C-terminus: Probable glycine dehydrogenase (decarboxylating) subunit 1 (444 aa).

This sequence belongs to the GcvP family. N-terminal subunit subfamily. In terms of assembly, the glycine cleavage system is composed of four proteins: P, T, L and H. In this organism, the P 'protein' is a heterodimer of two subunits.

The catalysed reaction is N(6)-[(R)-lipoyl]-L-lysyl-[glycine-cleavage complex H protein] + glycine + H(+) = N(6)-[(R)-S(8)-aminomethyldihydrolipoyl]-L-lysyl-[glycine-cleavage complex H protein] + CO2. Functionally, the glycine cleavage system catalyzes the degradation of glycine. The P protein binds the alpha-amino group of glycine through its pyridoxal phosphate cofactor; CO(2) is released and the remaining methylamine moiety is then transferred to the lipoamide cofactor of the H protein. This is Probable glycine dehydrogenase (decarboxylating) subunit 1 from Prosthecochloris aestuarii (strain DSM 271 / SK 413).